Consider the following 436-residue polypeptide: uncharacterized protein (436 aa).

Positions 1-20 (MKCAVAILLVCLTLQQAAYG) are cleaved as a signal peptide. 3 coiled-coil regions span residues 25–87 (EEVK…ALRN), 154–207 (MRKT…NSVE), and 247–329 (ESWG…ASLL). Residues 371 to 390 (EEEIAPSTEEDGSEELEADS) are compositionally biased toward acidic residues. Residues 371 to 419 (EEEIAPSTEEDGSEELEADSYDSKVGGESPISQRTEERQGAEERSRLRR) form a disordered region. The span at 404 to 415 (RTEERQGAEERS) shows a compositional bias: basic and acidic residues.

Component of the acid-insoluble organic matrix of the aragonitic skeleton (at protein level).

The protein localises to the secreted. This is an uncharacterized protein from Acropora millepora (Staghorn coral).